The sequence spans 57 residues: Large ribosomal subunit protein bL32 (57 aa).

Residues 1–16 (MAVQKSRKTPSRRGMR) are compositionally biased toward basic residues. Positions 1-37 (MAVQKSRKTPSRRGMRRSHDALSTTAITVDETTGELH) are disordered. Residues 21–31 (ALSTTAITVDE) are compositionally biased toward polar residues.

It belongs to the bacterial ribosomal protein bL32 family.

The protein is Large ribosomal subunit protein bL32 of Hydrogenovibrio crunogenus (strain DSM 25203 / XCL-2) (Thiomicrospira crunogena).